The following is a 248-amino-acid chain: tRNA (guanine-N(7)-)-methyltransferase (248 aa).

S-adenosyl-L-methionine contacts are provided by E80, E105, D132, and D155. The active site involves D155. Substrate is bound by residues K159, D191, and 223–226; that span reads TKFE.

This sequence belongs to the class I-like SAM-binding methyltransferase superfamily. TrmB family.

The enzyme catalyses guanosine(46) in tRNA + S-adenosyl-L-methionine = N(7)-methylguanosine(46) in tRNA + S-adenosyl-L-homocysteine. The protein operates within tRNA modification; N(7)-methylguanine-tRNA biosynthesis. Catalyzes the formation of N(7)-methylguanine at position 46 (m7G46) in tRNA. This chain is tRNA (guanine-N(7)-)-methyltransferase, found in Nocardioides sp. (strain ATCC BAA-499 / JS614).